A 203-amino-acid chain; its full sequence is Small ribosomal subunit protein uS4 (203 aa).

The S4 RNA-binding domain occupies 93–156; it reads RRLDNVVYRL…AKVPAILEAV (64 aa).

Belongs to the universal ribosomal protein uS4 family. Part of the 30S ribosomal subunit. Contacts protein S5. The interaction surface between S4 and S5 is involved in control of translational fidelity.

One of the primary rRNA binding proteins, it binds directly to 16S rRNA where it nucleates assembly of the body of the 30S subunit. Its function is as follows. With S5 and S12 plays an important role in translational accuracy. This chain is Small ribosomal subunit protein uS4, found in Streptococcus mutans serotype c (strain ATCC 700610 / UA159).